We begin with the raw amino-acid sequence, 317 residues long: WSCD family member CG9164 (317 aa).

Residues phenylalanine 8–asparagine 28 form a helical membrane-spanning segment. N-linked (GlcNAc...) asparagine glycans are attached at residues asparagine 151, asparagine 227, and asparagine 233.

The protein belongs to the WSCD family.

It localises to the membrane. The chain is WSCD family member CG9164 from Drosophila melanogaster (Fruit fly).